A 748-amino-acid chain; its full sequence is E3 ubiquitin-protein ligase SMURF2 (748 aa).

The C2 domain maps to 1–119 (MSNPGGRRNG…TGYQRLDLCK (119 aa)). Lysine 119 is covalently cross-linked (Glycyl lysine isopeptide (Lys-Gly) (interchain with G-Cter in ubiquitin)). WW domains follow at residues 157 to 190 (NDLP…RPTR), 251 to 284 (PDLP…DPRV), and 297 to 330 (GPLP…DPRL). The HECT domain maps to 414–748 (RPKDLWKRLM…IEETCGFAVE (335 aa)). The active-site Glycyl thioester intermediate is cysteine 716.

As to quaternary structure, interacts (via WW domains) with SMAD1. Interacts (via WW domains) with SMAD2 (via PY-motif). Interacts (via WW domains) with SMAD3 (via PY-motif). Interacts with SMAD6. Interacts with SMAD7 (via PY-motif) and TGFBR1; SMAD7 recruits SMURF2 to the TGF-beta receptor and regulates its degradation. Does not interact with SMAD4; SMAD4 lacks a PY-motif. Interacts with AIMP1. Interacts with NDFIP1 and NDFIP2; this interaction activates the E3 ubiquitin-protein ligase. Interacts with TTC3. Post-translationally, auto-ubiquitinated and ubiquitinated in the presence of RNF11 and UBE2D1. Ubiquitinated by the SCF(FBXL15) complex and TTC3, leading to its degradation by the proteasome. 'Lys-48'-linked polyubiquitination mediated by TRAF4 at Lys-119 leads to SMURF2 proteasomal degradation.

Its subcellular location is the nucleus. The protein resides in the cytoplasm. The protein localises to the cell membrane. It localises to the membrane raft. The enzyme catalyses S-ubiquitinyl-[E2 ubiquitin-conjugating enzyme]-L-cysteine + [acceptor protein]-L-lysine = [E2 ubiquitin-conjugating enzyme]-L-cysteine + N(6)-ubiquitinyl-[acceptor protein]-L-lysine.. It functions in the pathway protein modification; protein ubiquitination. Activated by NDFIP1- and NDFIP2-binding. In terms of biological role, E3 ubiquitin-protein ligase which accepts ubiquitin from an E2 ubiquitin-conjugating enzyme in the form of a thioester and then directly transfers the ubiquitin to targeted substrates. Interacts with SMAD7 to trigger SMAD7-mediated transforming growth factor beta/TGF-beta receptor ubiquitin-dependent degradation, thereby down-regulating TGF-beta signaling. In addition, interaction with SMAD7 activates autocatalytic degradation, which is prevented by interaction with AIMP1. Also forms a stable complex with TGF-beta receptor-mediated phosphorylated SMAD1, SMAD2 and SMAD3, and targets SMAD1 and SMAD2 for ubiquitination and proteasome-mediated degradation. SMAD2 may recruit substrates, such as SNON, for ubiquitin-dependent degradation. Negatively regulates TGFB1-induced epithelial-mesenchymal transition and myofibroblast differentiation. This chain is E3 ubiquitin-protein ligase SMURF2, found in Mus musculus (Mouse).